A 163-amino-acid chain; its full sequence is ATP synthase subunit b (163 aa).

Residues Val-10–Tyr-29 traverse the membrane as a helical segment.

This sequence belongs to the ATPase B chain family. As to quaternary structure, F-type ATPases have 2 components, F(1) - the catalytic core - and F(0) - the membrane proton channel. F(1) has five subunits: alpha(3), beta(3), gamma(1), delta(1), epsilon(1). F(0) has three main subunits: a(1), b(2) and c(10-14). The alpha and beta chains form an alternating ring which encloses part of the gamma chain. F(1) is attached to F(0) by a central stalk formed by the gamma and epsilon chains, while a peripheral stalk is formed by the delta and b chains.

The protein resides in the cell membrane. F(1)F(0) ATP synthase produces ATP from ADP in the presence of a proton or sodium gradient. F-type ATPases consist of two structural domains, F(1) containing the extramembraneous catalytic core and F(0) containing the membrane proton channel, linked together by a central stalk and a peripheral stalk. During catalysis, ATP synthesis in the catalytic domain of F(1) is coupled via a rotary mechanism of the central stalk subunits to proton translocation. Its function is as follows. Component of the F(0) channel, it forms part of the peripheral stalk, linking F(1) to F(0). The protein is ATP synthase subunit b of Desulforudis audaxviator (strain MP104C).